Here is a 460-residue protein sequence, read N- to C-terminus: ATP synthase subunit beta (460 aa).

Gly-150–Thr-157 contacts ATP.

Belongs to the ATPase alpha/beta chains family. As to quaternary structure, F-type ATPases have 2 components, CF(1) - the catalytic core - and CF(0) - the membrane proton channel. CF(1) has five subunits: alpha(3), beta(3), gamma(1), delta(1), epsilon(1). CF(0) has three main subunits: a(1), b(2) and c(9-12). The alpha and beta chains form an alternating ring which encloses part of the gamma chain. CF(1) is attached to CF(0) by a central stalk formed by the gamma and epsilon chains, while a peripheral stalk is formed by the delta and b chains.

Its subcellular location is the cell inner membrane. The enzyme catalyses ATP + H2O + 4 H(+)(in) = ADP + phosphate + 5 H(+)(out). In terms of biological role, produces ATP from ADP in the presence of a proton gradient across the membrane. The catalytic sites are hosted primarily by the beta subunits. In Escherichia coli (strain SMS-3-5 / SECEC), this protein is ATP synthase subunit beta.